The chain runs to 241 residues: 2-C-methyl-D-erythritol 4-phosphate cytidylyltransferase (241 aa).

The protein belongs to the IspD/TarI cytidylyltransferase family. IspD subfamily.

It catalyses the reaction 2-C-methyl-D-erythritol 4-phosphate + CTP + H(+) = 4-CDP-2-C-methyl-D-erythritol + diphosphate. It functions in the pathway isoprenoid biosynthesis; isopentenyl diphosphate biosynthesis via DXP pathway; isopentenyl diphosphate from 1-deoxy-D-xylulose 5-phosphate: step 2/6. Catalyzes the formation of 4-diphosphocytidyl-2-C-methyl-D-erythritol from CTP and 2-C-methyl-D-erythritol 4-phosphate (MEP). This chain is 2-C-methyl-D-erythritol 4-phosphate cytidylyltransferase, found in Alkaliphilus metalliredigens (strain QYMF).